Reading from the N-terminus, the 1193-residue chain is Pyruvate carboxylase (1193 aa).

The region spanning 41-493 (QFQKILVANR…WTTFIDDTTE (453 aa)) is the Biotin carboxylation domain. Lys-159, Glu-243, and His-278 together coordinate ATP. Residues 163–360 (RQLAIRCNVP…IVAAQIQIAA (198 aa)) enclose the ATP-grasp domain. The active site involves Arg-335. A Pyruvate carboxyltransferase domain is found at 579–847 (CLIMDTTWRD…DPGLNSAHVR (269 aa)). Substrate contacts are provided by residues 587–591 (RDAHQ) and Arg-660. Asp-588 serves as a coordination point for a divalent metal cation. Residues Lys-756, His-786, and His-788 each contribute to the a divalent metal cation site. Position 756 is an N6-carboxylysine (Lys-756). Thr-921 lines the substrate pocket. Residues 1116–1191 (KADVGDSSQV…DGQDLVCKIT (76 aa)) form the Biotinyl-binding domain. N6-biotinyllysine is present on Lys-1157.

The cofactor is biotin. Zn(2+) serves as cofactor.

It localises to the cytoplasm. The catalysed reaction is hydrogencarbonate + pyruvate + ATP = oxaloacetate + ADP + phosphate + H(+). It functions in the pathway carbohydrate biosynthesis; gluconeogenesis. In terms of biological role, pyruvate carboxylase catalyzes a 2-step reaction, involving the ATP-dependent carboxylation of the covalently attached biotin in the first step and the transfer of the carboxyl group to pyruvate in the second. This Aspergillus terreus (strain NIH 2624 / FGSC A1156) protein is Pyruvate carboxylase (pyc).